The following is a 536-amino-acid chain: Phosphoenolpyruvate carboxykinase (ATP) (536 aa).

Residues Arg62, Tyr203, and Lys209 each coordinate substrate. ATP is bound by residues Lys209, His228, and 244-252; that span reads GLSGTGKTT. Positions 209 and 228 each coordinate Mn(2+). Asp265 is a binding site for Mn(2+). ATP is bound by residues Glu293, Arg329, 445–446, and Thr451; that span reads RI. Arg329 lines the substrate pocket.

This sequence belongs to the phosphoenolpyruvate carboxykinase (ATP) family. As to quaternary structure, monomer. Mn(2+) serves as cofactor.

The protein resides in the cytoplasm. The catalysed reaction is oxaloacetate + ATP = phosphoenolpyruvate + ADP + CO2. Its pathway is carbohydrate biosynthesis; gluconeogenesis. Its function is as follows. Involved in the gluconeogenesis. Catalyzes the conversion of oxaloacetate (OAA) to phosphoenolpyruvate (PEP) through direct phosphoryl transfer between the nucleoside triphosphate and OAA. The protein is Phosphoenolpyruvate carboxykinase (ATP) of Glaesserella parasuis serovar 5 (strain SH0165) (Haemophilus parasuis).